Consider the following 394-residue polypeptide: Probable purine permease 23 (394 aa).

Residues 1–20 show a composition bias toward basic and acidic residues; that stretch reads MEMTEASKHTTTHEESEHVQ. The segment at 1–24 is disordered; the sequence is MEMTEASKHTTTHEESEHVQNPEP. Ser29 is modified (phosphoserine). 10 consecutive transmembrane segments (helical) span residues 43–63, 85–105, 124–144, 152–172, 180–200, 211–231, 254–274, 301–321, 328–348, and 352–372; these read ISVLICLFLVLLGDSLVILLL, WMQALIQNAAFPILIPLFFIF, LILLYFSLGVLVAAHSKLYAL, GFFMLISGSQLIFTLIFTAII, WIIISIVLILVSYAFGGPVFS, GIQAWLTFAASVAFALSLCLV, VLEMQICVSSVASVVCLVGLF, VGLALSWQVWAVGLIGLVLYV, IVHMCASPLMAFIVVLAFDFI, and FSWPRIGALIGSVLALGSYFY.

Belongs to the purine permeases (TC 2.A.7.14) family.

The protein resides in the membrane. In Arabidopsis thaliana (Mouse-ear cress), this protein is Probable purine permease 23 (PUP23).